Here is an 89-residue protein sequence, read N- to C-terminus: Small ribosomal subunit protein uS17 (89 aa).

This sequence belongs to the universal ribosomal protein uS17 family. In terms of assembly, part of the 30S ribosomal subunit.

Functionally, one of the primary rRNA binding proteins, it binds specifically to the 5'-end of 16S ribosomal RNA. The protein is Small ribosomal subunit protein uS17 of Verminephrobacter eiseniae (strain EF01-2).